The chain runs to 136 residues: Keratin-associated protein 9-3 (136 aa).

11 tandem repeats follow at residues 3–7 (CCATS), 21–25 (CCQPT), 31–35 (CCQPS), 36–40 (CCEAS), 41–45 (CCQPS), 46–50 (CCETG), 87–91 (CCVVS), 97–101 (CCQLH), 107–111 (CCRPS), 117–121 (CCRPA), and 126–130 (CCQPS). The 11 X 5 AA repeats of C-C-[AEQVR]-[ALPTV]-[AGHST] stretch occupies residues 21–130 (CCQPTCTQSS…ACCCYCCQPS (110 aa)).

The protein belongs to the KRTAP type 9 family. As to quaternary structure, interacts with hair keratins.

Its function is as follows. In the hair cortex, hair keratin intermediate filaments are embedded in an interfilamentous matrix, consisting of hair keratin-associated proteins (KRTAP), which are essential for the formation of a rigid and resistant hair shaft through their extensive disulfide bond cross-linking with abundant cysteine residues of hair keratins. The matrix proteins include the high-sulfur and high-glycine-tyrosine keratins. The chain is Keratin-associated protein 9-3 from Mus musculus (Mouse).